Here is a 602-residue protein sequence, read N- to C-terminus: Elongation factor 4 (602 aa).

A tr-type G domain is found at 7–189 (SKIRNFCIIA…AIVRRVPPPQ (183 aa)). Residues 19-24 (DHGKST) and 136-139 (NKVD) contribute to the GTP site.

Belongs to the TRAFAC class translation factor GTPase superfamily. Classic translation factor GTPase family. LepA subfamily.

The protein resides in the cell inner membrane. The catalysed reaction is GTP + H2O = GDP + phosphate + H(+). Required for accurate and efficient protein synthesis under certain stress conditions. May act as a fidelity factor of the translation reaction, by catalyzing a one-codon backward translocation of tRNAs on improperly translocated ribosomes. Back-translocation proceeds from a post-translocation (POST) complex to a pre-translocation (PRE) complex, thus giving elongation factor G a second chance to translocate the tRNAs correctly. Binds to ribosomes in a GTP-dependent manner. The chain is Elongation factor 4 from Prochlorococcus marinus (strain MIT 9301).